Consider the following 1290-residue polypeptide: Nonribosomal peptide synthetase 6 (1290 aa).

The disordered stretch occupies residues methionine 1–glutamine 27. The interval serine 260–cysteine 657 is adenylation. The region spanning alanine 775–valine 851 is the Carrier domain. Serine 812 is subject to O-(pantetheine 4'-phosphoryl)serine. Positions threonine 846–arginine 870 are disordered. Residues arginine 852–arginine 870 are compositionally biased toward basic and acidic residues. The condensation stretch occupies residues glycine 914–valine 1162.

This sequence belongs to the NRP synthetase family.

Functionally, nonribosomal peptide synthesis (NRPS) is a key mechanism responsible for the biosynthesis of bioactive metabolites which are potentially contributing to organismal virulence. This is Nonribosomal peptide synthetase 6 (NRPS6) from Aspergillus fumigatus (strain ATCC MYA-4609 / CBS 101355 / FGSC A1100 / Af293) (Neosartorya fumigata).